The sequence spans 49 residues: MKLLNQMELLLSTCKNRYVLTREVAEYAKKTPSPNAVILAIWLMARKTK.

Belongs to the RNA polymerase subunit omega family.

The protein resides in the plastid. It localises to the chloroplast. The catalysed reaction is RNA(n) + a ribonucleoside 5'-triphosphate = RNA(n+1) + diphosphate. Its function is as follows. May be involved in RNA polymerase activity. The protein is Putative DNA-directed RNA polymerase subunit omega (rpoZ) of Cyanidioschyzon merolae (strain NIES-3377 / 10D) (Unicellular red alga).